The chain runs to 857 residues: Envelope glycoprotein B (857 aa).

The signal sequence occupies residues 1 to 21 (MTRRRVLSVVVLLAALACRLG). Over 22–732 (AQTPEQPAPP…SGFISFFKNP (711 aa)) the chain is Virion surface. Cystine bridges form between C51–C528, C68–C484, C141–C206, C295–C342, and C551–C588. Residue N76 is glycosylated (N-linked (GlcNAc...) asparagine; by host). The interval 108–114 (IYNGWYA) is involved in fusion and/or binding to host membrane. A glycan (N-linked (GlcNAc...) asparagine; by host) is linked at N163. Residues 192–200 (GWLIWTYRT) are involved in fusion and/or binding to host membrane. N-linked (GlcNAc...) asparagine; by host glycans are attached at residues N290, N329, N348, and N395. Positions 398–452 (ELTTPTSSPPSSPSPPAPPAARGSTSAAVLRRRRRDAGNATTPVPPAAPGKSLGT) are disordered. A compositionally biased stretch (pro residues) spans 404 to 416 (SSPPSSPSPPAPP). N436, N563, and N629 each carry an N-linked (GlcNAc...) asparagine; by host glycan. 2 hydrophobic membrane proximal region regions span residues 678–730 (LDNA…SFFK) and 709–729 (NLVSTVGGLFSSLVSGFISFF). Residues 733 to 753 (FGGMLILVLVAGVVILVISLT) traverse the membrane as a helical segment. Topologically, residues 754–857 (RRTRQMSQQP…ALLGEAETEF (104 aa)) are intravirion. A disordered region spans residues 832–857 (FPGLRRRRYHDPETAAALLGEAETEF). Low complexity predominate over residues 845-857 (TAAALLGEAETEF).

This sequence belongs to the herpesviridae glycoprotein B family. Homotrimer; disulfide-linked. Binds to heparan sulfate proteoglycans. Interacts with gH/gL heterodimer. In terms of processing, a proteolytic cleavage by host furin generates two subunits that remain linked by disulfide bonds.

It localises to the virion membrane. It is found in the host cell membrane. Its subcellular location is the host endosome membrane. The protein resides in the host Golgi apparatus membrane. In terms of biological role, envelope glycoprotein that forms spikes at the surface of virion envelope. Essential for the initial attachment to heparan sulfate moieties of the host cell surface proteoglycans. Involved in fusion of viral and cellular membranes leading to virus entry into the host cell. Following initial binding to its host receptors, membrane fusion is mediated by the fusion machinery composed at least of gB and the heterodimer gH/gL. May be involved in the fusion between the virion envelope and the outer nuclear membrane during virion egress. This Epstein-Barr virus (strain GD1) (HHV-4) protein is Envelope glycoprotein B.